The primary structure comprises 319 residues: Ribonucleoside-diphosphate reductase small chain (319 aa).

Asp70, Glu101, and His104 together coordinate Fe cation. Residue Tyr108 is part of the active site. The Fe cation site is built by Glu163, Glu197, and His200. The segment at 313 to 319 (FSLDVDF) is interaction with R1.

The protein belongs to the ribonucleoside diphosphate reductase small chain family. Interacts with RNR1/OPG080 subunit. Can interact with host RNR1 supunit. Requires Fe cation as cofactor.

It catalyses the reaction a 2'-deoxyribonucleoside 5'-diphosphate + [thioredoxin]-disulfide + H2O = a ribonucleoside 5'-diphosphate + [thioredoxin]-dithiol. In terms of biological role, ribonucleoside-diphosphate reductase holoenzyme provides the precursors necessary for viral DNA synthesis. Allows virus growth in non-dividing cells. Catalyzes the biosynthesis of deoxyribonucleotides from the corresponding ribonucleotides. In Vaccinia virus (strain L-IVP) (VACV), this protein is Ribonucleoside-diphosphate reductase small chain (OPG048).